Here is a 360-residue protein sequence, read N- to C-terminus: Phosphoserine aminotransferase (360 aa).

L-glutamate is bound at residue Arg-41. Positions 101, 152, 172, and 195 each coordinate pyridoxal 5'-phosphate. An N6-(pyridoxal phosphate)lysine modification is found at Lys-196. 237–238 (NT) contacts pyridoxal 5'-phosphate.

It belongs to the class-V pyridoxal-phosphate-dependent aminotransferase family. SerC subfamily. In terms of assembly, homodimer. The cofactor is pyridoxal 5'-phosphate.

Its subcellular location is the cytoplasm. It carries out the reaction O-phospho-L-serine + 2-oxoglutarate = 3-phosphooxypyruvate + L-glutamate. It catalyses the reaction 4-(phosphooxy)-L-threonine + 2-oxoglutarate = (R)-3-hydroxy-2-oxo-4-phosphooxybutanoate + L-glutamate. It participates in amino-acid biosynthesis; L-serine biosynthesis; L-serine from 3-phospho-D-glycerate: step 2/3. The protein operates within cofactor biosynthesis; pyridoxine 5'-phosphate biosynthesis; pyridoxine 5'-phosphate from D-erythrose 4-phosphate: step 3/5. In terms of biological role, catalyzes the reversible conversion of 3-phosphohydroxypyruvate to phosphoserine and of 3-hydroxy-2-oxo-4-phosphonooxybutanoate to phosphohydroxythreonine. In Burkholderia ambifaria (strain MC40-6), this protein is Phosphoserine aminotransferase.